Reading from the N-terminus, the 116-residue chain is Small ribosomal subunit protein uS13 (116 aa).

A disordered region spans residues 92–116 (RRGLPVRGQNTKNNARTRKGAKRSR). Residues 106–116 (ARTRKGAKRSR) show a composition bias toward basic residues.

This sequence belongs to the universal ribosomal protein uS13 family. As to quaternary structure, part of the 30S ribosomal subunit. Forms a loose heterodimer with protein S19. Forms two bridges to the 50S subunit in the 70S ribosome.

Its function is as follows. Located at the top of the head of the 30S subunit, it contacts several helices of the 16S rRNA. In the 70S ribosome it contacts the 23S rRNA (bridge B1a) and protein L5 of the 50S subunit (bridge B1b), connecting the 2 subunits; these bridges are implicated in subunit movement. Contacts the tRNAs in the A and P-sites. The chain is Small ribosomal subunit protein uS13 from Lactobacillus delbrueckii subsp. bulgaricus (strain ATCC 11842 / DSM 20081 / BCRC 10696 / JCM 1002 / NBRC 13953 / NCIMB 11778 / NCTC 12712 / WDCM 00102 / Lb 14).